Here is a 204-residue protein sequence, read N- to C-terminus: Ribosomal RNA large subunit methyltransferase E (204 aa).

5 residues coordinate S-adenosyl-L-methionine: glycine 49, tryptophan 51, aspartate 69, asparagine 87, and aspartate 111. Lysine 151 functions as the Proton acceptor in the catalytic mechanism.

The protein belongs to the class I-like SAM-binding methyltransferase superfamily. RNA methyltransferase RlmE family.

Its subcellular location is the cytoplasm. The enzyme catalyses uridine(2552) in 23S rRNA + S-adenosyl-L-methionine = 2'-O-methyluridine(2552) in 23S rRNA + S-adenosyl-L-homocysteine + H(+). Functionally, specifically methylates the uridine in position 2552 of 23S rRNA at the 2'-O position of the ribose in the fully assembled 50S ribosomal subunit. The polypeptide is Ribosomal RNA large subunit methyltransferase E (Nitratidesulfovibrio vulgaris (strain ATCC 29579 / DSM 644 / CCUG 34227 / NCIMB 8303 / VKM B-1760 / Hildenborough) (Desulfovibrio vulgaris)).